The following is a 553-amino-acid chain: MRSDNTKKGDARAPNRSLLKAIGVTDSEMKKPFIAVVNSWTEFIPGHIHLDKVAEAVKAGIRNAGGVPFEFHTIGVCDGIAMGHEGMKYSLPSREAIEDTIEIMIQGQQMDGMVMVTSCDKITPGHLMAAGRVDIPAIVVTGGPMLPGFVDDKYTDLVSVFEGVGSCQSGAVSSEKLKQLEDLCCCGAGSCAGMFTANTMACMTEALGLSLPGCATAHAVDAKKMRMAKESGERIVEMVSEGLTARKIVTDKSFENAIRVDLAVGGSTNTTLHLPAIAHEFGLELPLEKFNELSKTTPHLIGLRPGGENFMIDFERAGGVQAIMKRLVTKLNLDEKTITGKTVGENIDEFVIVNPKTNARVITTIEEPLHEEGGIAVLKGNLAPDGSVVKQSAVHEKMLRHTGPARVFDSEEEAMETILKGDIKSGDVVVIRYEGPKGGPGMREMLSPTSAIAGMGLIDSVALITDGRFSGGTRGPCIGHISPEAYEGGPIGLIQEGDIIEIDMPERRLELKVSEEDLEKRRVLFKPVEKEATGYLSRYRKIVSSASKGAIRE.

Asp-78 lines the Mg(2+) pocket. [2Fe-2S] cluster is bound at residue Cys-119. The Mg(2+) site is built by Asp-120 and Lys-121. N6-carboxylysine is present on Lys-121. Cys-191 contributes to the [2Fe-2S] cluster binding site. Glu-444 is a Mg(2+) binding site. The active-site Proton acceptor is the Ser-470.

Belongs to the IlvD/Edd family. As to quaternary structure, homodimer. Requires [2Fe-2S] cluster as cofactor. Mg(2+) is required as a cofactor.

It carries out the reaction (2R)-2,3-dihydroxy-3-methylbutanoate = 3-methyl-2-oxobutanoate + H2O. The catalysed reaction is (2R,3R)-2,3-dihydroxy-3-methylpentanoate = (S)-3-methyl-2-oxopentanoate + H2O. It participates in amino-acid biosynthesis; L-isoleucine biosynthesis; L-isoleucine from 2-oxobutanoate: step 3/4. The protein operates within amino-acid biosynthesis; L-valine biosynthesis; L-valine from pyruvate: step 3/4. Its function is as follows. Functions in the biosynthesis of branched-chain amino acids. Catalyzes the dehydration of (2R,3R)-2,3-dihydroxy-3-methylpentanoate (2,3-dihydroxy-3-methylvalerate) into 2-oxo-3-methylpentanoate (2-oxo-3-methylvalerate) and of (2R)-2,3-dihydroxy-3-methylbutanoate (2,3-dihydroxyisovalerate) into 2-oxo-3-methylbutanoate (2-oxoisovalerate), the penultimate precursor to L-isoleucine and L-valine, respectively. The polypeptide is Dihydroxy-acid dehydratase (Methanococcoides burtonii (strain DSM 6242 / NBRC 107633 / OCM 468 / ACE-M)).